A 383-amino-acid chain; its full sequence is MVTVEEVRKAQRAEGPATVLAIGTATPPNCVGQSTYPDYYFRITNSEHKIELKQKFQRMCDKSMIKKRYMYLTEEILKENPSMCEYMAPSLDARQDMVIVEIPKLGKEAATKAIKEWGQPKSKITHLVFCTTSGVDMPGADYQLIKLFGLRPSVKRLMMYQQGCFAGGTVLRLAKDLAENNRGARVLVVCSEITVVTFRGPSDTHLDCLVGQALFGDGVASIIVGADPLPEIEKPLFELVSAAQTILPDSEGAIEGHLREVGLTFHLLENVPALISKNIEKSLNETFKPLDIMDWNSLFWIAHPGGPAILDQVEAKLGLKPEKLEATGHILSEYGNMSSACVLFILDVVRRKSAANGVTTRILSIGQISKSLLILAWFLFSLV.

The active-site Nucleophile and monoketide coumarate intermediate is the C164.

The protein belongs to the thiolase-like superfamily. Chalcone/stilbene synthases family. In terms of assembly, homodimer. In terms of tissue distribution, expressed in fruits.

It catalyses the reaction 4-coumaroyl-CoA + malonyl-CoA + H2O + H(+) = 4-hydroxybenzalacetone + 2 CO2 + 2 CoA. It carries out the reaction (E)-4-coumaroyl-CoA + 3 malonyl-CoA + 3 H(+) = 2',4,4',6'-tetrahydroxychalcone + 3 CO2 + 4 CoA. The protein operates within secondary metabolite biosynthesis; flavonoid biosynthesis. With respect to regulation, inhibited by glutathione. Functionally, bifunctional polyketide synthase producing both 4-hydroxybenzalacetone and naringenin chalcone. Can use p-coumaryl-CoA and ferulyl-CoA as substrates. Catalyzes the initial key reaction step in the biosynthesis of phenylbutanoids. This chain is Polyketide synthase 4 (PKS4), found in Rubus idaeus (Raspberry).